The chain runs to 89 residues: HssA/B-like protein 10 (89 aa).

Belongs to the hssA/B family.

The chain is HssA/B-like protein 10 (hssl10) from Dictyostelium discoideum (Social amoeba).